A 307-amino-acid chain; its full sequence is Acetaldehyde dehydrogenase (307 aa).

Position 12–15 (12–15 (SGNI)) interacts with NAD(+). The active-site Acyl-thioester intermediate is the Cys-130. Residues 161–169 (SVGPGTRQN) and Asn-272 contribute to the NAD(+) site.

It belongs to the acetaldehyde dehydrogenase family.

The catalysed reaction is acetaldehyde + NAD(+) + CoA = acetyl-CoA + NADH + H(+). The protein is Acetaldehyde dehydrogenase of Shewanella pealeana (strain ATCC 700345 / ANG-SQ1).